Reading from the N-terminus, the 484-residue chain is Chromosomal replication initiator protein DnaA (484 aa).

Residues 1-74 are domain I, interacts with DnaA modulators; it reads MEKSKNIWSL…ILTKNGYNNV (74 aa). The segment at 74–139 is domain II; the sequence is VTIVFTNQPP…EEEPTNFKNP (66 aa). The segment at 140–356 is domain III, AAA+ region; that stretch reads FLKKRYTFEN…AAVTKLKAYI (217 aa). Residues Gly184, Gly186, Lys187, and Thr188 each contribute to the ATP site. The segment at 357–484 is domain IV, binds dsDNA; the sequence is DLDNIEIDID…TELMNKIKKN (128 aa).

It belongs to the DnaA family. Oligomerizes as a right-handed, spiral filament on DNA at oriC.

The protein localises to the cytoplasm. Plays an essential role in the initiation and regulation of chromosomal replication. ATP-DnaA binds to the origin of replication (oriC) to initiate formation of the DNA replication initiation complex once per cell cycle. Binds the DnaA box (a 9 base pair repeat at the origin) and separates the double-stranded (ds)DNA. Forms a right-handed helical filament on oriC DNA; dsDNA binds to the exterior of the filament while single-stranded (ss)DNA is stabiized in the filament's interior. The ATP-DnaA-oriC complex binds and stabilizes one strand of the AT-rich DNA unwinding element (DUE), permitting loading of DNA polymerase. After initiation quickly degrades to an ADP-DnaA complex that is not apt for DNA replication. Binds acidic phospholipids. The polypeptide is Chromosomal replication initiator protein DnaA (Borrelia garinii subsp. bavariensis (strain ATCC BAA-2496 / DSM 23469 / PBi) (Borreliella bavariensis)).